The following is a 798-amino-acid chain: RNA cytosine-C(5)-methyltransferase NSUN2 (798 aa).

The span at 1–13 (MGRRNRRNRQRHQ) shows a compositional bias: basic residues. Residues 1–30 (MGRRNRRNRQRHQRSTEQRSPAEEEQRRKA) form a disordered region. Over residues 14-30 (RSTEQRSPAEEEQRRKA) the composition is skewed to basic and acidic residues. S-adenosyl-L-methionine contacts are provided by residues 186-192 (CAAPGSK), aspartate 217, aspartate 244, and aspartate 270. The active-site Nucleophile is the cysteine 323. 2 disordered regions span residues 476–499 (DEPAVDTENGETKPCTNQSDSSKT) and 723–798 (KACD…ESVD). The segment covering 723-747 (KACDEEHIDEKMDIDGAKEESKELS) has biased composition (basic and acidic residues). Residues 751-762 (SGDDEDPKEEDV) are compositionally biased toward acidic residues. Basic and acidic residues predominate over residues 763 to 772 (IDRGVLEHVA).

The protein belongs to the class I-like SAM-binding methyltransferase superfamily. RsmB/NOP family. TRM4 subfamily.

The protein resides in the nucleus. It localises to the nucleolus. Its subcellular location is the cytoplasm. It is found in the mitochondrion. The protein localises to the cytoskeleton. The protein resides in the spindle. It localises to the secreted. Its subcellular location is the extracellular exosome. It carries out the reaction cytidine(48) in tRNA + S-adenosyl-L-methionine = 5-methylcytidine(48) in tRNA + S-adenosyl-L-homocysteine + H(+). The enzyme catalyses cytidine(49) in tRNA + S-adenosyl-L-methionine = 5-methylcytidine(49) in tRNA + S-adenosyl-L-homocysteine + H(+). The catalysed reaction is cytidine(50) in tRNA + S-adenosyl-L-methionine = 5-methylcytidine(50) in tRNA + S-adenosyl-L-homocysteine + H(+). It catalyses the reaction cytidine(34) in tRNA precursor + S-adenosyl-L-methionine = 5-methylcytidine(34) in tRNA precursor + S-adenosyl-L-homocysteine + H(+). It carries out the reaction a cytidine in mRNA + S-adenosyl-L-methionine = a 5-methylcytidine in mRNA + S-adenosyl-L-homocysteine + H(+). Functionally, RNA cytosine C(5)-methyltransferase that methylates cytosine to 5-methylcytosine (m5C) in various RNAs, such as tRNAs, mRNAs and some long non-coding RNAs (lncRNAs). Involved in various processes, such as epidermal stem cell differentiation, testis differentiation and maternal to zygotic transition during early development: acts by increasing protein synthesis; cytosine C(5)-methylation promoting tRNA stability and preventing mRNA decay. Methylates cytosine to 5-methylcytosine (m5C) at positions 34 and 48 of intron-containing tRNA(Leu)(CAA) precursors, and at positions 48, 49 and 50 of tRNA(Gly)(GCC) precursors. tRNA methylation is required generation of RNA fragments derived from tRNAs (tRFs). Also mediates C(5)-methylation of mitochondrial tRNAs. Catalyzes cytosine C(5)-methylation of mRNAs, leading to stabilize them and prevent mRNA decay. Cytosine C(5)-methylation of mRNAs also regulates mRNA export. Also mediates cytosine C(5)-methylation of non-coding RNAs, such as vault RNAs (vtRNAs), promoting their processing into regulatory small RNAs. Required for proper spindle assembly and chromosome segregation, independently of its methyltransferase activity. The chain is RNA cytosine-C(5)-methyltransferase NSUN2 from Xenopus tropicalis (Western clawed frog).